Reading from the N-terminus, the 341-residue chain is S-adenosylmethionine:tRNA ribosyltransferase-isomerase (341 aa).

It belongs to the QueA family. As to quaternary structure, monomer.

It localises to the cytoplasm. The enzyme catalyses 7-aminomethyl-7-carbaguanosine(34) in tRNA + S-adenosyl-L-methionine = epoxyqueuosine(34) in tRNA + adenine + L-methionine + 2 H(+). Its pathway is tRNA modification; tRNA-queuosine biosynthesis. In terms of biological role, transfers and isomerizes the ribose moiety from AdoMet to the 7-aminomethyl group of 7-deazaguanine (preQ1-tRNA) to give epoxyqueuosine (oQ-tRNA). This chain is S-adenosylmethionine:tRNA ribosyltransferase-isomerase, found in Clostridium botulinum (strain Alaska E43 / Type E3).